Reading from the N-terminus, the 210-residue chain is Regulatory protein RecX (210 aa).

The interval 28-47 is disordered; that stretch reads SRRQEEGAASSLFDREAEEK.

It belongs to the RecX family.

It is found in the cytoplasm. Modulates RecA activity. This is Regulatory protein RecX from Corynebacterium efficiens (strain DSM 44549 / YS-314 / AJ 12310 / JCM 11189 / NBRC 100395).